The sequence spans 331 residues: Cathepsin 7 (331 aa).

The signal sequence occupies residues 1-17; that stretch reads MTVAVFLAILCLRAALA. Positions 18 to 111 are cleaved as a propeptide — activation peptide; the sequence is APRPDYSLDA…GKHIQKRNVK (94 aa). Residues 33–50 carry the Nuclear localization signal motif; that stretch reads KRNNAKTYSPEEEKQRRA. N-linked (GlcNAc...) asparagine glycosylation is present at N72. Intrachain disulfides connect C133–C176, C167–C209, and C267–C320. Residue C136 is part of the active site. Catalysis depends on residues H274 and N298.

Belongs to the peptidase C1 family.

It is found in the endosome. The protein localises to the lysosome. It localises to the cytoplasm. The protein resides in the perinuclear region. Its subcellular location is the golgi apparatus. It is found in the nucleus. The protein localises to the secreted. It localises to the extracellular space. In terms of biological role, involved in trophoblast cell proliferation and differentiation probably by affecting mitotic cell cycle progression. Proteolytic activity and nuclear localization are essential for its role in cell cycle progression. In Rattus norvegicus (Rat), this protein is Cathepsin 7 (Cts7).